A 272-amino-acid chain; its full sequence is NADPH-dependent 7-cyano-7-deazaguanine reductase (272 aa).

A substrate-binding site is contributed by 80–82 (VES). 82 to 83 (SK) is a binding site for NADPH. The active-site Thioimide intermediate is Cys-178. Catalysis depends on Asp-185, which acts as the Proton donor. 217 to 218 (AE) is a binding site for substrate. 246–247 (RG) is a binding site for NADPH.

Belongs to the GTP cyclohydrolase I family. QueF type 2 subfamily. As to quaternary structure, homodimer.

Its subcellular location is the cytoplasm. The catalysed reaction is 7-aminomethyl-7-carbaguanine + 2 NADP(+) = 7-cyano-7-deazaguanine + 2 NADPH + 3 H(+). It participates in tRNA modification; tRNA-queuosine biosynthesis. Functionally, catalyzes the NADPH-dependent reduction of 7-cyano-7-deazaguanine (preQ0) to 7-aminomethyl-7-deazaguanine (preQ1). The polypeptide is NADPH-dependent 7-cyano-7-deazaguanine reductase (Rickettsia typhi (strain ATCC VR-144 / Wilmington)).